A 1083-amino-acid polypeptide reads, in one-letter code: UPF0182 protein BAD_0641 (1083 aa).

The interval 1–72 (MSFFDMFGPM…TSKPNRPRKP (72 aa)) is disordered. Transmembrane regions (helical) follow at residues 78–98 (IFIG…ALAQ), 125–145 (LWLA…TLAI), 178–198 (IAVV…NANW), 239–259 (SLLL…MGGI), 281–301 (IGIW…LGVF), 325–345 (VTFI…LWIM), and 372–392 (VAIA…PVLL). The tract at residues 976-1061 (DSGASAGDAE…SDAAMKKGDW (86 aa)) is disordered. Composition is skewed to basic and acidic residues over residues 991–1013 (TDDK…DGKQ) and 1050–1060 (KDSDAAMKKGD).

It belongs to the UPF0182 family.

The protein localises to the cell membrane. The chain is UPF0182 protein BAD_0641 from Bifidobacterium adolescentis (strain ATCC 15703 / DSM 20083 / NCTC 11814 / E194a).